We begin with the raw amino-acid sequence, 102 residues long: Small ribosomal subunit protein uS10 (102 aa).

It belongs to the universal ribosomal protein uS10 family. As to quaternary structure, part of the 30S ribosomal subunit.

Its function is as follows. Involved in the binding of tRNA to the ribosomes. The chain is Small ribosomal subunit protein uS10 from Streptococcus suis (strain 98HAH33).